The following is a 315-amino-acid chain: MENVYDLAIIGSGPAGLAAALYGARAKMKTIMIEGQKVGGQIVITHEVANYPGSVREATGPSLIERMEEQANEFGAEKVMDKIVDVDLDGKIKVIKGEKAEYKAKSVILATGAAPRLAGCPGEQELTGKGVSYCATCDADFFEDMEVFVVGGGDTAVEEAMYLAKFARKVTIVHRRDELRAAKSIQEKAFKNPKLDFMWNSAIEEIKGDGIVESAVFKNLVTGETTEYFANEEDGTFGIFVFIGYIPKSDVFKGKITLDDAGYIITDDNMKTNVEGVFAAGDIRVKSLRQVVTACADGAIAATQAEKYVEANFEE.

FAD is bound at residue 34-41 (EGQKVGGQ). The cysteines at positions 134 and 137 are disulfide-linked. An FAD-binding site is contributed by 282-291 (DIRVKSLRQV).

It belongs to the class-II pyridine nucleotide-disulfide oxidoreductase family. In terms of assembly, homodimer. FAD is required as a cofactor.

The protein resides in the cytoplasm. It catalyses the reaction [thioredoxin]-dithiol + NADP(+) = [thioredoxin]-disulfide + NADPH + H(+). The polypeptide is Thioredoxin reductase (trxB) (Peptoclostridium acidaminophilum (Eubacterium acidaminophilum)).